Here is a 112-residue protein sequence, read N- to C-terminus: Large ribosomal subunit protein bL17 (112 aa).

This sequence belongs to the bacterial ribosomal protein bL17 family. As to quaternary structure, part of the 50S ribosomal subunit. Contacts protein L32.

The sequence is that of Large ribosomal subunit protein bL17 from Caldanaerobacter subterraneus subsp. tengcongensis (strain DSM 15242 / JCM 11007 / NBRC 100824 / MB4) (Thermoanaerobacter tengcongensis).